The chain runs to 955 residues: MAKVRVYELAKEFGVESKAVLAKLQEMGEFVRSASSTVEAPVVRRLKEAFSQSSESTEGAKGGQEKKKPSPKPQPSPQQQTKASAPSAGGETPRPAVPKPGPGLKPGPRPVPKPGPRPGPRPEGGAGKAGQQPSGAQGPARPESGKTPRPVPKPGPRPGNNPFSSTASGMGTRPTPRPPASGGTGAPRPGPRPHPGMMPPRPGASAGGPPRPQAPRPQAPRPGPGTAGGRPGSSAGGPPRPVPRPGPRPSPMNMPASRPTPPGGARPSTSSRSGGGRGRGGGGGAGPRGGGAGGGAPRTGFGGRPGGGRGRGGTAGAFGRPGGRPSRSRKSKKQRRQELKDMQAPSFGGVKIPSGNGKVIRLSRGASLADFGERIDVNPASLVQVVMTQLGEMVTATQSLPDETLQLLGEELNYTVEVVSPEDEDRELLESFSIEFGEDIGSEEDLKPRAPVVTVMGHVDHGKTRLLDAIRNTNVASGEAGGITQHIGAYQVTTTVDGEERKITFIDTPGHEAFTAMRARGAQATDIAVLVVAADDGVKPQTAEAIDHAKAADVPIVVAVNKIDLPTADPQKVRAQLTEYGLVAEEYGGNVQFVDISAKENLNIDQLLEAIILTADAELDLKANPDMPAQGLAIEAYLDRGRGSMATVLVQRGTLRVGDSIVCGDAYGRVRAMLDENGNRVKEAEPSRPVQVLGLTNVPSAGDSFLVVKDDRVARQIAQQREARERFAQQAKASRRVTLDNWQKTLEEGQREELLLIIKGDMSGSVEALEESLLKIDPGTDEVAIRVIGRGVGAITQNDINLAASSGAVIIGFNVRPEGKNSELAERMGVDIRYYSVIYQAIEEVEAALKGMLKPEYEEVQLGTAEIREIFKVPRVGNVAGAVVRSGVIKRNAKARLIRDGVVVSDNLTVESLRRFKDDVTEVREGFECGIGIGYNDIRVEDIIETFEMREKPRD.

The segment at alanine 49 to isoleucine 352 is disordered. Residues proline 77–alanine 88 are compositionally biased toward low complexity. 4 stretches are compositionally biased toward pro residues: residues proline 95–arginine 121, arginine 149–glycine 159, arginine 188–proline 202, and proline 209–glycine 223. A compositionally biased stretch (gly residues) spans glycine 225–alanine 235. The segment covering proline 238–glycine 264 has biased composition (pro residues). Positions serine 273 to glycine 322 are enriched in gly residues. Residues serine 326–arginine 335 show a composition bias toward basic residues. Residues proline 448–aspartate 620 enclose the tr-type G domain. Residues glycine 457–threonine 464 form a G1 region. Glycine 457–threonine 464 contributes to the GTP binding site. A G2 region spans residues glycine 482 to histidine 486. The G3 stretch occupies residues aspartate 507–glycine 510. GTP is bound by residues aspartate 507–histidine 511 and asparagine 561–aspartate 564. The interval asparagine 561 to aspartate 564 is G4. The interval serine 597–lysine 599 is G5.

It belongs to the TRAFAC class translation factor GTPase superfamily. Classic translation factor GTPase family. IF-2 subfamily.

The protein resides in the cytoplasm. Its function is as follows. One of the essential components for the initiation of protein synthesis. Protects formylmethionyl-tRNA from spontaneous hydrolysis and promotes its binding to the 30S ribosomal subunits. Also involved in the hydrolysis of GTP during the formation of the 70S ribosomal complex. The sequence is that of Translation initiation factor IF-2 from Thermobifida fusca (strain YX).